Here is a 486-residue protein sequence, read N- to C-terminus: Glutamyl-tRNA(Gln) amidotransferase subunit A (486 aa).

Active-site charge relay system residues include K76 and S151. S175 (acyl-ester intermediate) is an active-site residue.

It belongs to the amidase family. GatA subfamily. As to quaternary structure, heterotrimer of A, B and C subunits.

The enzyme catalyses L-glutamyl-tRNA(Gln) + L-glutamine + ATP + H2O = L-glutaminyl-tRNA(Gln) + L-glutamate + ADP + phosphate + H(+). Allows the formation of correctly charged Gln-tRNA(Gln) through the transamidation of misacylated Glu-tRNA(Gln) in organisms which lack glutaminyl-tRNA synthetase. The reaction takes place in the presence of glutamine and ATP through an activated gamma-phospho-Glu-tRNA(Gln). This chain is Glutamyl-tRNA(Gln) amidotransferase subunit A, found in Nitrosomonas europaea (strain ATCC 19718 / CIP 103999 / KCTC 2705 / NBRC 14298).